A 312-amino-acid polypeptide reads, in one-letter code: Protoheme IX farnesyltransferase (312 aa).

Transmembrane regions (helical) follow at residues 34–54 (LVIF…HPVL), 56–76 (ITSL…NMAL), 119–139 (ILVN…YVVI), 152–172 (IVIG…AATG), 179–199 (LLLF…LALF), 225–245 (ILLY…LGYF), 248–268 (VYGV…IEVF), and 283–303 (LFAF…LEAV).

It belongs to the UbiA prenyltransferase family. Protoheme IX farnesyltransferase subfamily.

Its subcellular location is the cell inner membrane. It carries out the reaction heme b + (2E,6E)-farnesyl diphosphate + H2O = Fe(II)-heme o + diphosphate. Its pathway is porphyrin-containing compound metabolism; heme O biosynthesis; heme O from protoheme: step 1/1. Its function is as follows. Converts heme B (protoheme IX) to heme O by substitution of the vinyl group on carbon 2 of heme B porphyrin ring with a hydroxyethyl farnesyl side group. The sequence is that of Protoheme IX farnesyltransferase from Bradyrhizobium sp. (strain BTAi1 / ATCC BAA-1182).